The primary structure comprises 359 residues: Molybdenum import ATP-binding protein ModC (359 aa).

Residues 1–236 (MNTEIKARFR…IDLPAAFADD (236 aa)) form the ABC transporter domain. Position 34 to 41 (34 to 41 (GHSGSGKT)) interacts with ATP. One can recognise a Mop domain in the interval 294–359 (QSSILNCVSA…AQIKAVALLA (66 aa)).

The protein belongs to the ABC transporter superfamily. Molybdate importer (TC 3.A.1.8) family. In terms of assembly, the complex is composed of two ATP-binding proteins (ModC), two transmembrane proteins (ModB) and a solute-binding protein (ModA).

It is found in the cell inner membrane. It catalyses the reaction molybdate(out) + ATP + H2O = molybdate(in) + ADP + phosphate + H(+). Part of the ABC transporter complex ModABC involved in molybdenum import. Responsible for energy coupling to the transport system. The chain is Molybdenum import ATP-binding protein ModC from Dechloromonas aromatica (strain RCB).